Here is a 219-residue protein sequence, read N- to C-terminus: Ran-binding protein 1 homolog c (219 aa).

Over residues 1–11 (MASTEPERENR) the composition is skewed to basic and acidic residues. Disordered regions lie at residues 1–30 (MAST…VAPI) and 160–219 (QVGK…EAST). Over residues 12–23 (EDETEVNEDEDT) the composition is skewed to acidic residues. The region spanning 26 to 161 (QVAPIVRLEE…FTEIAESQQV (136 aa)) is the RanBD1 domain. A compositionally biased stretch (basic and acidic residues) spans 185–219 (SEEKAKEAEEKEPAKEDKETKKEKVEEEKKTEAST).

It is found in the nucleus. The protein localises to the nuclear pore complex. The polypeptide is Ran-binding protein 1 homolog c (RANBP1C) (Arabidopsis thaliana (Mouse-ear cress)).